We begin with the raw amino-acid sequence, 472 residues long: Methanethiol oxidase (472 aa).

An N-acetylalanine modification is found at A2. A phosphoserine mark is found at S111, S371, and S467.

It belongs to the selenium-binding protein family. As to quaternary structure, interacts with USP33. Post-translationally, the N-terminus is blocked.

It localises to the nucleus. Its subcellular location is the cytoplasm. The protein resides in the cytosol. It is found in the membrane. It catalyses the reaction methanethiol + O2 + H2O = hydrogen sulfide + formaldehyde + H2O2 + H(+). It participates in organosulfur degradation. Functionally, catalyzes the oxidation of methanethiol, an organosulfur compound known to be produced in substantial amounts by gut bacteria. Selenium-binding protein which may be involved in the sensing of reactive xenobiotics in the cytoplasm. May be involved in intra-Golgi protein transport. In Pongo abelii (Sumatran orangutan), this protein is Methanethiol oxidase (SELENBP1).